Consider the following 318-residue polypeptide: MEGNQTWITDITLLGFQVGPALAILLCGLFSVFYTLTLLGNGVIFGIICLDSKLHTPMYFFLSHLAIIDMSYASNNVPKMLANLMNQKRTISFVPCIMQTFLYLAFAVTECLILVVMSYDRYVAICHPFQYTVIMSWRVCTILVLTSWSCGFALSLVHEILLLRLPFCGPRDVNHLFCEILSVLKLACADTWVNQVVIFATCVFVLVGPLSLILVSYMHILGAILKIQTKEGRIKAFSTCSSHLCVVGLFFGIAMVVYMVPDSNQREEQEKMLSLFHSVFNPMLNPLIYSLRNAQLKGALHRALQRKRSMRTVYGLCL.

Topologically, residues 1–24 are extracellular; it reads MEGNQTWITDITLLGFQVGPALAI. The N-linked (GlcNAc...) asparagine glycan is linked to Asn4. The helical transmembrane segment at 25–48 threads the bilayer; it reads LLCGLFSVFYTLTLLGNGVIFGII. The Cytoplasmic segment spans residues 49 to 56; the sequence is CLDSKLHT. The chain crosses the membrane as a helical span at residues 57 to 78; sequence PMYFFLSHLAIIDMSYASNNVP. Residues 79-99 are Extracellular-facing; the sequence is KMLANLMNQKRTISFVPCIMQ. A helical transmembrane segment spans residues 100–119; the sequence is TFLYLAFAVTECLILVVMSY. Over 120 to 138 the chain is Cytoplasmic; the sequence is DRYVAICHPFQYTVIMSWR. A helical transmembrane segment spans residues 139–157; the sequence is VCTILVLTSWSCGFALSLV. Over 158–194 the chain is Extracellular; that stretch reads HEILLLRLPFCGPRDVNHLFCEILSVLKLACADTWVN. The helical transmembrane segment at 195-218 threads the bilayer; that stretch reads QVVIFATCVFVLVGPLSLILVSYM. Residues 219-235 are Cytoplasmic-facing; that stretch reads HILGAILKIQTKEGRIK. The helical transmembrane segment at 236–258 threads the bilayer; that stretch reads AFSTCSSHLCVVGLFFGIAMVVY. The Extracellular segment spans residues 259–271; sequence MVPDSNQREEQEK. A helical transmembrane segment spans residues 272 to 291; that stretch reads MLSLFHSVFNPMLNPLIYSL. The Cytoplasmic segment spans residues 292 to 310; the sequence is RNAQLKGALHRALQRKRSM.

The protein belongs to the G-protein coupled receptor 1 family.

The protein resides in the cell membrane. In terms of biological role, odorant receptor. The protein is Olfactory receptor 2A2 (OR2A2) of Homo sapiens (Human).